Here is a 318-residue protein sequence, read N- to C-terminus: Quinolinate synthase (318 aa).

Iminosuccinate is bound by residues His-34 and Ser-51. Cys-96 contributes to the [4Fe-4S] cluster binding site. Iminosuccinate is bound by residues 122–124 (YIN) and Ser-139. Position 182 (Cys-182) interacts with [4Fe-4S] cluster. Iminosuccinate is bound by residues 208–210 (HPE) and Thr-225. Cys-275 serves as a coordination point for [4Fe-4S] cluster.

The protein belongs to the quinolinate synthase family. Type 2 subfamily. Requires [4Fe-4S] cluster as cofactor.

The protein resides in the cytoplasm. It carries out the reaction iminosuccinate + dihydroxyacetone phosphate = quinolinate + phosphate + 2 H2O + H(+). The protein operates within cofactor biosynthesis; NAD(+) biosynthesis; quinolinate from iminoaspartate: step 1/1. Catalyzes the condensation of iminoaspartate with dihydroxyacetone phosphate to form quinolinate. In Synechocystis sp. (strain ATCC 27184 / PCC 6803 / Kazusa), this protein is Quinolinate synthase.